We begin with the raw amino-acid sequence, 211 residues long: Large ribosomal subunit protein eL13 (211 aa).

Lys-16 bears the N6-acetyllysine mark. Ser-52, Ser-77, and Ser-106 each carry phosphoserine. Glycyl lysine isopeptide (Lys-Gly) (interchain with G-Cter in SUMO2) cross-links involve residues Lys-123 and Lys-145. Lys-174 participates in a covalent cross-link: Glycyl lysine isopeptide (Lys-Gly) (interchain with G-Cter in SUMO1); alternate. Glycyl lysine isopeptide (Lys-Gly) (interchain with G-Cter in SUMO2); alternate cross-links involve residues Lys-174 and Lys-177. At Lys-177 the chain carries N6-acetyllysine; alternate.

Belongs to the eukaryotic ribosomal protein eL13 family. In terms of assembly, component of the 60S large ribosomal subunit (LSU). Higher levels of expression in benign breast lesions than in carcinomas.

It localises to the cytoplasm. Component of the ribosome, a large ribonucleoprotein complex responsible for the synthesis of proteins in the cell. The small ribosomal subunit (SSU) binds messenger RNAs (mRNAs) and translates the encoded message by selecting cognate aminoacyl-transfer RNA (tRNA) molecules. The large subunit (LSU) contains the ribosomal catalytic site termed the peptidyl transferase center (PTC), which catalyzes the formation of peptide bonds, thereby polymerizing the amino acids delivered by tRNAs into a polypeptide chain. The nascent polypeptides leave the ribosome through a tunnel in the LSU and interact with protein factors that function in enzymatic processing, targeting, and the membrane insertion of nascent chains at the exit of the ribosomal tunnel. As part of the LSU, it is probably required for its formation and the maturation of rRNAs. Plays a role in bone development. The polypeptide is Large ribosomal subunit protein eL13 (RPL13) (Homo sapiens (Human)).